The following is a 223-amino-acid chain: Cytidylate kinase (223 aa).

ATP is bound at residue 10-18; that stretch reads GPASSGKST.

Belongs to the cytidylate kinase family. Type 1 subfamily.

It localises to the cytoplasm. It catalyses the reaction CMP + ATP = CDP + ADP. The catalysed reaction is dCMP + ATP = dCDP + ADP. This chain is Cytidylate kinase, found in Streptococcus pneumoniae (strain Hungary19A-6).